The following is a 207-amino-acid chain: Granulocyte colony-stimulating factor (207 aa).

Residues 1–30 (MAGPATQSPMKLMALQLLLWHSALWTVQEA) form the signal peptide. Disulfide bonds link Cys69–Cys75 and Cys97–Cys107. Thr166 is a glycosylation site (O-linked (GalNAc...) threonine).

It belongs to the IL-6 superfamily. In terms of assembly, monomer. In terms of processing, O-glycan consists of Gal-GalNAc disaccharide which can be modified with up to two sialic acid residues (done in recombinantly expressed G-CSF from CHO cells).

It localises to the secreted. Granulocyte/macrophage colony-stimulating factors are cytokines that act in hematopoiesis by controlling the production, differentiation, and function of 2 related white cell populations of the blood, the granulocytes and the monocytes-macrophages. This CSF induces granulocytes. This chain is Granulocyte colony-stimulating factor (CSF3), found in Homo sapiens (Human).